A 277-amino-acid chain; its full sequence is Glucose-6-phosphatase catalytic subunit 1 (277 aa).

Arg4 is a substrate binding site. The next 2 membrane-spanning stretches (helical) occupy residues 39 to 59 and 67 to 87; these read GHAM…LSIA and LLYR…ELVV. Catalysis depends on His40, which acts as the Proton donor. Arg91 is a binding site for substrate. His97 (nucleophile) is an active-site residue. The next 3 helical transmembrane spans lie at 131–151, 215–235, and 250–270; these read FLIT…LKAL, IGCI…TFSP, and AVAL…IYPV. Residues 274-277 carry the Prevents secretion from ER motif; it reads GKNL.

This sequence belongs to the glucose-6-phosphatase family.

It localises to the endoplasmic reticulum membrane. It catalyses the reaction D-glucose 6-phosphate + H2O = D-glucose + phosphate. It functions in the pathway carbohydrate biosynthesis; gluconeogenesis. Functionally, hydrolyzes glucose-6-phosphate to glucose in the endoplasmic reticulum. Forms with the glucose-6-phosphate transporter (SLC37A4/G6PT) the complex responsible for glucose production in the terminal step of glycogenolysis and gluconeogenesis. Hence, it is the key enzyme in homeostatic regulation of blood glucose levels. This is Glucose-6-phosphatase catalytic subunit 1 (g6pc1) from Haplochromis xenognathus (Lake Victoria cichlid).